The sequence spans 491 residues: Probable Xaa-Pro aminopeptidase An01g13040 (491 aa).

Mn(2+) is bound by residues aspartate 276, aspartate 287, glutamate 420, and glutamate 459.

This sequence belongs to the peptidase M24B family. Requires Mn(2+) as cofactor.

It carries out the reaction Release of any N-terminal amino acid, including proline, that is linked to proline, even from a dipeptide or tripeptide.. Functionally, catalyzes the removal of a penultimate prolyl residue from the N-termini of peptides. The chain is Probable Xaa-Pro aminopeptidase An01g13040 from Aspergillus niger (strain ATCC MYA-4892 / CBS 513.88 / FGSC A1513).